A 410-amino-acid chain; its full sequence is MEKFLQEAKSASRVLSLLSGAKKNRVLKEMANALRVNKADLIDANALDMADGKKNSLSLALMDRLLLDEVRIEAMAVAIEEIAALKEPVGRVLDGWVTEAGLKIEKVSIPIGVIGIIYESRPNVTSDTAALCFKSSNVCVLKGGKEAQNSNEAIAKVLQATLEKNSLPKSLISLVPDSSREGVAKLIKMDKYVDLIIPRGGEGLIKYVCDNATVSVVKHDKGQCHTYIDKEAILEDAIKIAINAKTQRPGVCNAMETLLVDSAIAKSALPLIKAEFDKANTKLKGCLKTQEIIDVESVTEEDYDTEYLDNILNMRVVDGVEEAIEHIVRFGSGHSEAIVTQNVTTAEKFLNSIDAAAVYLNASTRFTDGGSFGFGAEVGISTNKLHARGPMGIEGLTTYKYKIYGSGQTR.

This sequence belongs to the gamma-glutamyl phosphate reductase family.

Its subcellular location is the cytoplasm. It carries out the reaction L-glutamate 5-semialdehyde + phosphate + NADP(+) = L-glutamyl 5-phosphate + NADPH + H(+). Its pathway is amino-acid biosynthesis; L-proline biosynthesis; L-glutamate 5-semialdehyde from L-glutamate: step 2/2. In terms of biological role, catalyzes the NADPH-dependent reduction of L-glutamate 5-phosphate into L-glutamate 5-semialdehyde and phosphate. The product spontaneously undergoes cyclization to form 1-pyrroline-5-carboxylate. The protein is Gamma-glutamyl phosphate reductase of Sulfurimonas denitrificans (strain ATCC 33889 / DSM 1251) (Thiomicrospira denitrificans (strain ATCC 33889 / DSM 1251)).